The primary structure comprises 131 residues: Large ribosomal subunit protein bL17 (131 aa).

The protein belongs to the bacterial ribosomal protein bL17 family. As to quaternary structure, part of the 50S ribosomal subunit. Contacts protein L32.

The chain is Large ribosomal subunit protein bL17 from Cupriavidus metallidurans (strain ATCC 43123 / DSM 2839 / NBRC 102507 / CH34) (Ralstonia metallidurans).